The chain runs to 498 residues: Nucleoprotein (498 aa).

Residues 1–18 carry the Unconventional nuclear localization signal motif; it reads MASQGTKRSYEQMETDGE. The interval 1-21 is disordered; that stretch reads MASQGTKRSYEQMETDGERQN. Residues 8–21 show a composition bias toward basic and acidic residues; it reads RSYEQMETDGERQN. The Bipartite nuclear localization signal signature appears at 198-216; sequence KRGINDRNFWRGENGRKTR.

This sequence belongs to the influenza viruses nucleoprotein family. In terms of assembly, homomultimerizes to form the nucleocapsid. May bind host exportin-1/XPO1. Binds to viral genomic RNA. Protein-RNA contacts are mediated by a combination of electrostatic interactions between positively charged residues and the phosphate backbone and planar interactions between aromatic side chains and bases. Late in virus-infected cells, may be cleaved from a 56-kDa protein to a 53-kDa protein by a cellular caspase. This cleavage might be a marker for the onset of apoptosis in infected cells or have a specific function in virus host interaction.

The protein resides in the virion. It localises to the host nucleus. Its function is as follows. Encapsidates the negative strand viral RNA, protecting it from nucleases. The encapsidated genomic RNA is termed the ribonucleoprotein (RNP) and serves as template for transcription and replication. The RNP needs to be localized in the host nucleus to start an infectious cycle, but is too large to diffuse through the nuclear pore complex. NP comprises at least 2 nuclear localization signals that are responsible for the active RNP import into the nucleus through cellular importin alpha/beta pathway. Later in the infection, nclear export of RNPs are mediated through viral proteins NEP interacting with M1 which binds nucleoproteins. It is possible that nucleoprotein binds directly host exportin-1/XPO1 and plays an active role in RNPs nuclear export. M1 interaction with RNP seems to hide nucleoprotein's nuclear localization signals. Soon after a virion infects a new cell, M1 dissociates from the RNP under acidification of the virion driven by M2 protein. Dissociation of M1 from RNP unmasks nucleoprotein's nuclear localization signals, targeting the RNP to the nucleus. The protein is Nucleoprotein of Influenza A virus (strain A/China:Nanchang/11/1996 H1N1).